We begin with the raw amino-acid sequence, 202 residues long: MGVEIKGLTVPALLIKLDPSKSLQENIDELKQKLSSAFFKGSYAVVDYNGLELNEESKVEIEKVLKDFNASVLGFQNTKNNKESLKGVTQKKSLKIINKTLRSGQKVEYDGDVLILGDVNPDAYVVSSGSVIVMGNLRGVVHAGANGDETAVVMALKLRPQQIRISNYIARSPDEPDVKAEESNSPEIAYIENNAIVIDKIK.

Belongs to the MinC family. As to quaternary structure, interacts with MinD and FtsZ.

In terms of biological role, cell division inhibitor that blocks the formation of polar Z ring septums. Rapidly oscillates between the poles of the cell to destabilize FtsZ filaments that have formed before they mature into polar Z rings. Prevents FtsZ polymerization. This chain is Probable septum site-determining protein MinC, found in Sulfurihydrogenibium sp. (strain YO3AOP1).